A 100-amino-acid polypeptide reads, in one-letter code: Aspartyl/glutamyl-tRNA(Asn/Gln) amidotransferase subunit C (100 aa).

It belongs to the GatC family. As to quaternary structure, heterotrimer of A, B and C subunits.

The enzyme catalyses L-glutamyl-tRNA(Gln) + L-glutamine + ATP + H2O = L-glutaminyl-tRNA(Gln) + L-glutamate + ADP + phosphate + H(+). It catalyses the reaction L-aspartyl-tRNA(Asn) + L-glutamine + ATP + H2O = L-asparaginyl-tRNA(Asn) + L-glutamate + ADP + phosphate + 2 H(+). Functionally, allows the formation of correctly charged Asn-tRNA(Asn) or Gln-tRNA(Gln) through the transamidation of misacylated Asp-tRNA(Asn) or Glu-tRNA(Gln) in organisms which lack either or both of asparaginyl-tRNA or glutaminyl-tRNA synthetases. The reaction takes place in the presence of glutamine and ATP through an activated phospho-Asp-tRNA(Asn) or phospho-Glu-tRNA(Gln). The polypeptide is Aspartyl/glutamyl-tRNA(Asn/Gln) amidotransferase subunit C (Streptococcus pneumoniae (strain Hungary19A-6)).